The chain runs to 605 residues: Kelch-like protein 41b (605 aa).

Positions Val32–Asp102 constitute a BTB domain. A BACK domain is found at Cys136–Glu238. Kelch repeat units follow at residues Gln345–Asn397, Leu398–Asn446, Leu447–Gly494, Ile496–Gly541, and Leu543–Asn598.

The protein resides in the cytoplasm. The protein localises to the cytoskeleton. Its subcellular location is the sarcoplasmic reticulum membrane. It is found in the endoplasmic reticulum membrane. Its function is as follows. Involved in skeletal muscle development and maintenance. In Danio rerio (Zebrafish), this protein is Kelch-like protein 41b.